Here is a 492-residue protein sequence, read N- to C-terminus: MSLWINGEWRPGRGPGFSKQDPVNLKVVWQGEAADAGQVAEAVAAARQAFPSWARLPFAARQAIVEKFAALLEASKAELTAVIGAETGKPRWEAAGEVTAMINKVAISVKAYHVRTGEQHSDLPDGAATLRHRPHGVLAVFGPYNFPGHLPNGHIVPALLAGNTVVFKPSELTPRSGEAVVKLWQQAGLPAGVLNLVQGGRETGEALSGQADIDGLLFTGSSTTGFHLHRQLAGQPQKILALEMGGNNPLIVDDPRDVDAVVHLTIQSAFITAGQRCTCARRLLVRRGEAGDAFLSRLVTVSQRLIPAAWDAEPQPFLGGLISEQAAQKVHQAWLQRVAAGAVTLLEPRLLQAGTSLLTPGIVDMSDVANVEDEEVFGPLLGVWRYDTFEEAIALANATRFGLSCGLISPEREKFDRLLLEARAGIVNWNKPLTGAASTAPFGGTGASGNHRPGAWYAADYCAWPMASLESPTLTLPASLSPGLDFLAGEAS.

Residue 220–225 participates in NAD(+) binding; the sequence is GSSTTG. Residues glutamate 243 and cysteine 277 contribute to the active site.

The protein belongs to the aldehyde dehydrogenase family. AstD subfamily.

It catalyses the reaction N-succinyl-L-glutamate 5-semialdehyde + NAD(+) + H2O = N-succinyl-L-glutamate + NADH + 2 H(+). The protein operates within amino-acid degradation; L-arginine degradation via AST pathway; L-glutamate and succinate from L-arginine: step 4/5. Functionally, catalyzes the NAD-dependent reduction of succinylglutamate semialdehyde into succinylglutamate. The sequence is that of N-succinylglutamate 5-semialdehyde dehydrogenase from Klebsiella pneumoniae subsp. pneumoniae (strain ATCC 700721 / MGH 78578).